The sequence spans 466 residues: uncharacterized protein (466 aa).

The protein belongs to the myoviridae tail sheath protein family.

This is an uncharacterized protein from Bacillus subtilis (strain 168).